The following is a 641-amino-acid chain: Homeobox protein ceh-38 (641 aa).

2 stretches are compositionally biased toward polar residues: residues 1-14 (MESS…TNGT) and 28-38 (DPSSTFINNTG). Disordered stretches follow at residues 1–79 (MESS…TSSA) and 129–244 (LHVD…GDRM). Positions 52-79 (TISPHPITPSASTSSATSATEEPATSSA) are enriched in low complexity. The span at 131–140 (VDSRRRESHD) shows a compositional bias: basic and acidic residues. Polar residues-rich tracts occupy residues 167–183 (TPTN…SSLL) and 190–204 (NTIG…TFGS). Positions 308–394 (NAEIGDDIYI…TRLAILDMKT (87 aa)) form a DNA-binding region, CUT. Disordered stretches follow at residues 398–428 (NRAS…PVSK), 485–508 (GGNI…VGDT), and 552–641 (FGVS…LAAN). A DNA-binding region (homeobox) is located at residues 427-486 (SKRPRLVFTDIQKRTLQAIFKETQRPSREMQQTIAEHLRLDLSTVANFFMNARRRSRLGG). A compositionally biased stretch (acidic residues) spans 571 to 604 (HEDDEELDELNDSELAYEEDVEIGDEEEEDEEQA). Over residues 613 to 626 (KVEELEEKTVIKEE) the composition is skewed to basic and acidic residues.

Belongs to the CUT homeobox family. Expressed in the embryo. After gastrulation, expressed in almost all cells. During larval and adult stages, expressed in the dorsal and ventral nerve cord, head and tail neurons, pharynx, gut and head.

It localises to the nucleus. Its function is as follows. Probable DNA-binding regulatory protein involved in cell-fate specification. The sequence is that of Homeobox protein ceh-38 (ceh-38) from Caenorhabditis elegans.